Consider the following 72-residue polypeptide: DNA-directed RNA polymerase subunit Rpo10 (72 aa).

Residues Cys-7, Cys-10, Cys-53, and Cys-54 each coordinate Zn(2+).

This sequence belongs to the archaeal Rpo10/eukaryotic RPB10 RNA polymerase subunit family. In terms of assembly, part of the RNA polymerase complex. Zn(2+) is required as a cofactor.

It is found in the cytoplasm. It carries out the reaction RNA(n) + a ribonucleoside 5'-triphosphate = RNA(n+1) + diphosphate. Its function is as follows. DNA-dependent RNA polymerase (RNAP) catalyzes the transcription of DNA into RNA using the four ribonucleoside triphosphates as substrates. The protein is DNA-directed RNA polymerase subunit Rpo10 of Thermoplasma acidophilum (strain ATCC 25905 / DSM 1728 / JCM 9062 / NBRC 15155 / AMRC-C165).